Consider the following 119-residue polypeptide: Large ribosomal subunit protein bL20 (119 aa).

It belongs to the bacterial ribosomal protein bL20 family.

Its function is as follows. Binds directly to 23S ribosomal RNA and is necessary for the in vitro assembly process of the 50S ribosomal subunit. It is not involved in the protein synthesizing functions of that subunit. The sequence is that of Large ribosomal subunit protein bL20 from Colwellia psychrerythraea (strain 34H / ATCC BAA-681) (Vibrio psychroerythus).